Reading from the N-terminus, the 303-residue chain is Glycine--tRNA ligase alpha subunit (303 aa).

It belongs to the class-II aminoacyl-tRNA synthetase family. As to quaternary structure, tetramer of two alpha and two beta subunits.

Its subcellular location is the cytoplasm. The enzyme catalyses tRNA(Gly) + glycine + ATP = glycyl-tRNA(Gly) + AMP + diphosphate. This is Glycine--tRNA ligase alpha subunit from Syntrophomonas wolfei subsp. wolfei (strain DSM 2245B / Goettingen).